The chain runs to 433 residues: Acetylcholine receptor-like protein cup-4 (433 aa).

Positions 1–24 (MKIIIFVCFILIFYLPIQKKHVNS) are cleaved as a signal peptide. N-linked (GlcNAc...) asparagine glycans are attached at residues Asn41 and Asn68. A disulfide bridge connects residues Cys178 and Cys192. Residues Asn237 and Asn249 are each glycosylated (N-linked (GlcNAc...) asparagine). Helical transmembrane passes span 282-302 (EAAVVTPCIVVASLISMTFFI), 307-327 (STFLLMMLHFYVQLIFLHDLV), 337-357 (IPFCIKLIGILMYTNGLTLVL), and 413-433 (PIIGFVLIILLICMFFVCLLL).

The protein belongs to the ligand-gated ion channel (TC 1.A.9) family. Acetylcholine receptor (TC 1.A.9.1) subfamily. Expressed in coelomocytes.

It is found in the cytoplasmic vesicle membrane. Its function is as follows. Thought to regulate endocytosis in coelomocytes through modulation of phospholipase C activity. Possible acetylcholine receptor. The protein is Acetylcholine receptor-like protein cup-4 (cup-4) of Caenorhabditis elegans.